A 459-amino-acid polypeptide reads, in one-letter code: Argininosuccinate lyase (459 aa).

Belongs to the lyase 1 family. Argininosuccinate lyase subfamily.

It localises to the cytoplasm. The catalysed reaction is 2-(N(omega)-L-arginino)succinate = fumarate + L-arginine. It functions in the pathway amino-acid biosynthesis; L-arginine biosynthesis; L-arginine from L-ornithine and carbamoyl phosphate: step 3/3. In Lactococcus lactis subsp. cremoris (strain MG1363), this protein is Argininosuccinate lyase.